The chain runs to 1146 residues: Error-prone DNA polymerase (1146 aa).

Disordered regions lie at residues 1-43 (MGWG…WSRK) and 154-178 (ATPE…PPGP). Residues 12–26 (ELERVLSGRPGRTDP) are compositionally biased toward basic and acidic residues.

Belongs to the DNA polymerase type-C family. DnaE2 subfamily.

The protein localises to the cytoplasm. The enzyme catalyses DNA(n) + a 2'-deoxyribonucleoside 5'-triphosphate = DNA(n+1) + diphosphate. Its function is as follows. DNA polymerase involved in damage-induced mutagenesis and translesion synthesis (TLS). It is not the major replicative DNA polymerase. This is Error-prone DNA polymerase from Nocardia farcinica (strain IFM 10152).